The following is a 221-amino-acid chain: Large ribosomal subunit protein uL3 (221 aa).

A disordered region spans residues 140-160 (GGPKTHGSGFHRHAGSIGMRS).

This sequence belongs to the universal ribosomal protein uL3 family. As to quaternary structure, part of the 50S ribosomal subunit. Forms a cluster with proteins L14 and L19.

Functionally, one of the primary rRNA binding proteins, it binds directly near the 3'-end of the 23S rRNA, where it nucleates assembly of the 50S subunit. This chain is Large ribosomal subunit protein uL3, found in Chlamydia caviae (strain ATCC VR-813 / DSM 19441 / 03DC25 / GPIC) (Chlamydophila caviae).